Here is a 605-residue protein sequence, read N- to C-terminus: Leucine-rich repeat-containing protein 40 (605 aa).

A disordered region spans residues 1-26; the sequence is MSRFRRGGKAPDPLSGFRAPKEQEPA. LRR repeat units follow at residues 83-104, 106-127, 129-151, 152-173, 175-196, 198-219, 221-242, 244-265, 266-287, 290-311, 313-335, 336-357, 429-450, 453-475, 476-497, 499-520, 522-543, 546-567, and 569-590; these read DLTK…ISLL, ALVV…IKEL, NLQK…QHLQ, NLKS…IGHL, ILEE…VGQL, GLVK…IGKM, NLKQ…VAGM, SLEQ…PFLT, KLKE…HLQN, SLSV…ISLL, GLER…GSLP, NLKS…ILNK, FITT…IVEM, SVCD…CMLL, KLTH…MEAM, RLQS…LYRI, TLET…QLIK, KLST…LGNC, and SLRA…ILAK.

The protein is Leucine-rich repeat-containing protein 40 (lrrc40) of Xenopus tropicalis (Western clawed frog).